Here is a 247-residue protein sequence, read N- to C-terminus: 2,3-bisphosphoglycerate-dependent phosphoglycerate mutase (247 aa).

Substrate contacts are provided by residues 8 to 15 (RHGESTWN), 21 to 22 (TG), Arg-60, 87 to 90 (ERHY), Lys-98, 114 to 115 (RR), and 183 to 184 (GN). The active-site Tele-phosphohistidine intermediate is the His-9. Catalysis depends on Glu-87, which acts as the Proton donor/acceptor.

The protein belongs to the phosphoglycerate mutase family. BPG-dependent PGAM subfamily. As to quaternary structure, homodimer.

The catalysed reaction is (2R)-2-phosphoglycerate = (2R)-3-phosphoglycerate. It participates in carbohydrate degradation; glycolysis; pyruvate from D-glyceraldehyde 3-phosphate: step 3/5. Catalyzes the interconversion of 2-phosphoglycerate and 3-phosphoglycerate. This is 2,3-bisphosphoglycerate-dependent phosphoglycerate mutase from Delftia acidovorans (strain DSM 14801 / SPH-1).